A 358-amino-acid polypeptide reads, in one-letter code: Probable G-protein coupled receptor 25 (358 aa).

The Extracellular portion of the chain corresponds to 1–43 (MQSTEPWSPSWGTLSWDYSGSGSLDQVELCPAWNLPYGHAIIP). A helical transmembrane segment spans residues 44–64 (ALYLAAFAVGLPGNAFVVWLL). Residues 65-76 (SRQRGPRRLVDT) lie on the Cytoplasmic side of the membrane. A helical membrane pass occupies residues 77–97 (FVLHLAAADLGFVLTLPLWAA). The Extracellular segment spans residues 98–113 (AEARGGLWPFGDGLCK). Cysteine 112 and cysteine 191 are oxidised to a cystine. Residues 114–134 (VSSFALAVTRCAGALLLAGMS) form a helical membrane-spanning segment. At 135–155 (VDRYLAVGRPLSARPLRSARC) the chain is on the cytoplasmic side. A helical transmembrane segment spans residues 156 to 176 (VRAVCGAAWAAAFLAGLPALL). The Extracellular segment spans residues 177 to 200 (YRGLQPSLDGVGSQCAEEPWEALQ). A helical transmembrane segment spans residues 201 to 221 (GVGLLLLLLTFALPLAVTLIC). Residues 222–239 (YWRVSRRLPRVGRARSNS) are Cytoplasmic-facing. The chain crosses the membrane as a helical span at residues 240–260 (LRIIFTVESVFVGCWLPFGVL). Topologically, residues 261–284 (RSLFHLARLQALPLPCSLLLALRW) are extracellular. The chain crosses the membrane as a helical span at residues 285-307 (GLTVTTCLAFVNSSANPVIYLLL). Topologically, residues 308 to 358 (DRSFRARARFGLCARAGRQVRRISSASSLSRDDSSVFRGRSPKVNSASATW) are cytoplasmic. A disordered region spans residues 339–358 (DDSSVFRGRSPKVNSASATW).

The protein belongs to the G-protein coupled receptor 1 family.

It localises to the membrane. Functionally, orphan receptor. The polypeptide is Probable G-protein coupled receptor 25 (Gpr25) (Mus musculus (Mouse)).